The sequence spans 298 residues: Adaptation to cold protein C (298 aa).

As to quaternary structure, interacts with the C-terminal extension of AtcJ. Also interacts with AtcB, but not with AtcA.

Its activity is regulated as follows. Interaction with AtcJ stabilizes AtcC. Functionally, involved in cold adaptation. The protein is Adaptation to cold protein C of Shewanella oneidensis (strain ATCC 700550 / JCM 31522 / CIP 106686 / LMG 19005 / NCIMB 14063 / MR-1).